The following is a 367-amino-acid chain: Glutamate 5-kinase (367 aa).

K10 provides a ligand contact to ATP. Substrate is bound by residues S50, D137, and N149. Residues 169–170 (TD) and 211–217 (TGGMSTK) contribute to the ATP site. The region spanning 275–353 (AGEITVDEGA…QQIDAILGYE (79 aa)) is the PUA domain.

This sequence belongs to the glutamate 5-kinase family.

Its subcellular location is the cytoplasm. The enzyme catalyses L-glutamate + ATP = L-glutamyl 5-phosphate + ADP. The protein operates within amino-acid biosynthesis; L-proline biosynthesis; L-glutamate 5-semialdehyde from L-glutamate: step 1/2. Its function is as follows. Catalyzes the transfer of a phosphate group to glutamate to form L-glutamate 5-phosphate. This is Glutamate 5-kinase from Salmonella paratyphi A (strain ATCC 9150 / SARB42).